Reading from the N-terminus, the 248-residue chain is Type III pantothenate kinase (248 aa).

Glu6–Lys13 is a binding site for ATP. Substrate is bound by residues Tyr94 and Gly101 to Arg104. Asp103 (proton acceptor) is an active-site residue. Residue Asp123 participates in K(+) binding. Residue Thr126 participates in ATP binding. Thr179 contributes to the substrate binding site.

It belongs to the type III pantothenate kinase family. In terms of assembly, homodimer. NH4(+) serves as cofactor. The cofactor is K(+).

The protein localises to the cytoplasm. It carries out the reaction (R)-pantothenate + ATP = (R)-4'-phosphopantothenate + ADP + H(+). It functions in the pathway cofactor biosynthesis; coenzyme A biosynthesis; CoA from (R)-pantothenate: step 1/5. Catalyzes the phosphorylation of pantothenate (Pan), the first step in CoA biosynthesis. This is Type III pantothenate kinase from Hydrogenovibrio crunogenus (strain DSM 25203 / XCL-2) (Thiomicrospira crunogena).